Consider the following 191-residue polypeptide: Glycerol-3-phosphate acyltransferase (191 aa).

Helical transmembrane passes span 10 to 30, 57 to 77, 84 to 104, 118 to 138, and 158 to 178; these read LAFI…CISA, FGSV…FLAV, FAST…YMAF, FVLV…FFVL, and YALL…LIFI.

It belongs to the PlsY family. Probably interacts with PlsX.

It is found in the cell inner membrane. The enzyme catalyses an acyl phosphate + sn-glycerol 3-phosphate = a 1-acyl-sn-glycero-3-phosphate + phosphate. The protein operates within lipid metabolism; phospholipid metabolism. Catalyzes the transfer of an acyl group from acyl-phosphate (acyl-PO(4)) to glycerol-3-phosphate (G3P) to form lysophosphatidic acid (LPA). This enzyme utilizes acyl-phosphate as fatty acyl donor, but not acyl-CoA or acyl-ACP. In Neorickettsia sennetsu (strain ATCC VR-367 / Miyayama) (Ehrlichia sennetsu), this protein is Glycerol-3-phosphate acyltransferase.